The primary structure comprises 147 residues: Peptide methionine sulfoxide reductase MsrB (147 aa).

The MsrB domain occupies Lys-8–Lys-131. Cys-120 serves as the catalytic Nucleophile.

It belongs to the MsrB Met sulfoxide reductase family.

It carries out the reaction L-methionyl-[protein] + [thioredoxin]-disulfide + H2O = L-methionyl-(R)-S-oxide-[protein] + [thioredoxin]-dithiol. The polypeptide is Peptide methionine sulfoxide reductase MsrB (Clostridium perfringens (strain SM101 / Type A)).